Reading from the N-terminus, the 404-residue chain is Short chain dehydrogenase sirR (404 aa).

The signal sequence occupies residues 1-28 (MHSKPQRALVIGATGVSGWSLCLQLLQT). Residues S56 and L58 each contribute to the NADP(+) site. 2 N-linked (GlcNAc...) asparagine glycosylation sites follow: N67 and N157. S237 acts as the Proton donor in catalysis. A glycan (N-linked (GlcNAc...) asparagine) is linked at N274. V291 serves as a coordination point for NADP(+).

This sequence belongs to the short-chain dehydrogenases/reductases (SDR) family. Highly divergent.

It participates in mycotoxin biosynthesis. Short chain dehydrogenase; part of the gene cluster that mediates the biosynthesis of sirodesmin PL, an epipolythiodioxopiperazine (ETP) characterized by a disulfide bridged cyclic dipeptide and that acts as a phytotoxin which is involved in the blackleg didease of canola. SirD catalyzes the O-prenylation of L-tyrosine (L-Tyr) in the presence of dimethylallyl diphosphate (DMAPP) to yield 4-O-dimethylallyl-L-Tyr, and therefore represents probably the first pathway-specific enzyme in the biosynthesis of sirodesmin PL. 4-O-dimethylallyl-L-Tyr, then undergoes condensation with L-Ser in a reaction catalyzed by the non-ribosomal peptide synthase sirP to form the diketopiperazine (DKP) backbone. Further bishydroxylation of the DKP performed by the cytochrome P450 monooxygenase sirC leads to the production of the intermediate phomamide. This step is essential to form the reactive thiol group required for toxicity of sirodesmin PL. The next steps of sirodesmin biosynthesis are not well understood yet, but some predictions could be made from intermediate compounds identification. Phomamide is converted into phomalizarine via oxidation, probably by sirT. Further oxidation, methylation (by sirM or sirN) and reduction steps convert phomalizarine to deacetyl sirodesmin. Finally, acetyltransferase sirH probably acetylates deacetyl sirodesmin to produce sirodesmin PL. The sequence is that of Short chain dehydrogenase sirR from Leptosphaeria maculans (Blackleg fungus).